Here is a 339-residue protein sequence, read N- to C-terminus: Phenylalanine--tRNA ligase alpha subunit (339 aa).

Glu247 is a Mg(2+) binding site.

It belongs to the class-II aminoacyl-tRNA synthetase family. Phe-tRNA synthetase alpha subunit type 1 subfamily. As to quaternary structure, tetramer of two alpha and two beta subunits. Mg(2+) is required as a cofactor.

The protein resides in the cytoplasm. It carries out the reaction tRNA(Phe) + L-phenylalanine + ATP = L-phenylalanyl-tRNA(Phe) + AMP + diphosphate + H(+). The polypeptide is Phenylalanine--tRNA ligase alpha subunit (Deinococcus deserti (strain DSM 17065 / CIP 109153 / LMG 22923 / VCD115)).